The chain runs to 108 residues: PTS system galactose-specific EIIB component (108 aa).

Positions 3 to 108 (DKVIALACAA…VLAAAENLMN (106 aa)) constitute a PTS EIIB type-3 domain. The Phosphocysteine intermediate role is filled by Cys-10. Cys-10 bears the Phosphocysteine; by EIIA mark.

It catalyses the reaction N(pros)-phospho-L-histidyl-[protein] + D-galactose(out) = D-galactose 6-phosphate(in) + L-histidyl-[protein]. Its function is as follows. The phosphoenolpyruvate-dependent sugar phosphotransferase system (sugar PTS), a major carbohydrate active transport system, catalyzes the phosphorylation of incoming sugar substrates concomitantly with their translocation across the cell membrane. Involved in galactose transport with PtcA and Lmg_0963. The chain is PTS system galactose-specific EIIB component from Lactococcus lactis subsp. cremoris (strain MG1363).